A 150-amino-acid polypeptide reads, in one-letter code: D-aminoacyl-tRNA deacylase (150 aa).

Positions 138 to 139 match the Gly-cisPro motif, important for rejection of L-amino acids motif; sequence GP.

Belongs to the DTD family. As to quaternary structure, homodimer.

Its subcellular location is the cytoplasm. The enzyme catalyses glycyl-tRNA(Ala) + H2O = tRNA(Ala) + glycine + H(+). The catalysed reaction is a D-aminoacyl-tRNA + H2O = a tRNA + a D-alpha-amino acid + H(+). Functionally, an aminoacyl-tRNA editing enzyme that deacylates mischarged D-aminoacyl-tRNAs. Also deacylates mischarged glycyl-tRNA(Ala), protecting cells against glycine mischarging by AlaRS. Acts via tRNA-based rather than protein-based catalysis; rejects L-amino acids rather than detecting D-amino acids in the active site. By recycling D-aminoacyl-tRNA to D-amino acids and free tRNA molecules, this enzyme counteracts the toxicity associated with the formation of D-aminoacyl-tRNA entities in vivo and helps enforce protein L-homochirality. The sequence is that of D-aminoacyl-tRNA deacylase from Thermosipho melanesiensis (strain DSM 12029 / CIP 104789 / BI429).